The primary structure comprises 310 residues: Syndecan-1 (310 aa).

The first 22 residues, 1–22 (MRRAALWLWLCALALSLQPALP), serve as a signal peptide directing secretion. Residues 23-254 (QIVATNLPPE…GLLDRKEVLG (232 aa)) are Extracellular-facing. Disordered regions lie at residues 27 to 100 (TNLP…EGPK) and 114 to 212 (LTAR…QDFT). The span at 32 to 42 (EDQDGSGDDSD) shows a compositional bias: acidic residues. The O-linked (Xyl...) (chondroitin sulfate) serine glycan is linked to S37. N43 is a glycosylation site (N-linked (GlcNAc...) asparagine). Residues S45 and S47 are each glycosylated (O-linked (Xyl...) (heparan sulfate) serine). Over residues 55–75 (ITLSQQTPSTWKDTQLLTAIP) the composition is skewed to polar residues. The segment covering 117-127 (REQEATPRPRE) has biased composition (basic and acidic residues). The span at 128 to 151 (TTQLPTTHLASTTTATTAQEPATS) shows a compositional bias: low complexity. Over residues 153-164 (PHRDMQPGHHET) the composition is skewed to basic and acidic residues. 2 O-linked (Xyl...) (chondroitin sulfate) serine glycosylation sites follow: S206 and S216. A helical membrane pass occupies residues 255-275 (GVIAGGLVGLIFAVCLVGFML). Residues 276–310 (YRMKKKDEGSYSLEEPKQANGGAYQKPTKQEEFYA) lie on the Cytoplasmic side of the membrane. Residues 284–310 (GSYSLEEPKQANGGAYQKPTKQEEFYA) are disordered. A Phosphoserine modification is found at S285.

The protein belongs to the syndecan proteoglycan family. In terms of assembly, interacts with CDCP1. Interacts (via C-terminus) with TIAM1 (via PDZ domain). Interacts with MDK. Shedding is enhanced by a number of factors such as heparanase, thrombin or EGF. Also by stress and wound healing. PMA-mediated shedding is inhibited by TIMP3. As to expression, detected in placenta (at protein level). Detected in fibroblasts (at protein level).

The protein resides in the membrane. The protein localises to the secreted. It is found in the extracellular exosome. Functionally, cell surface proteoglycan that contains both heparan sulfate and chondroitin sulfate and that links the cytoskeleton to the interstitial matrix. Regulates exosome biogenesis in concert with SDCBP and PDCD6IP. Able to induce its own expression in dental mesenchymal cells and also in the neighboring dental epithelial cells via an MSX1-mediated pathway. This chain is Syndecan-1, found in Homo sapiens (Human).